A 980-amino-acid polypeptide reads, in one-letter code: Zinc finger BED domain-containing protein 6 (980 aa).

The segment at 1-89 is required for nucleolar localization; sequence MSVCTLSVPV…ILAKKFSKDL (89 aa). A disordered region spans residues 89–109; sequence LGSGRPVADAPASLASGAPEQ. The BED-type 1 zinc-finger motif lies at 130–187; that stretch reads AKTSIVWHFFHVDPQYTWRAICNLCEKSVSRGKPGSHLGTSTLQRHLQARHSPHWTRA. Residues Cys-151, Cys-154, His-175, and His-180 each coordinate Zn(2+). Positions 201–239 are disordered; it reads LDLSLSPPSPGSNGSFEYIPTDSVDENRMGKKRDKSASD. The span at 203 to 215 shows a compositional bias: low complexity; that stretch reads LSLSPPSPGSNGS. Residues 265-322 form a BED-type 2 zinc finger; that stretch reads AKTSAVWNFFYTDPQHISRAVCNICKRSVSRGRPGSHLGTSTLQRHLQATHPIHWAVA. Residues Cys-286, Cys-289, His-310, and His-315 each contribute to the Zn(2+) site. A disordered region spans residues 328-397; that stretch reads AIGNGLDETE…ADQDNPVHAQ (70 aa). The span at 360–373 shows a compositional bias: acidic residues; the sequence is TAEDLSDSDTDEPP. A Phosphoserine modification is found at Ser-383. Residues 868–950 are HATC (Hobo-Ac-Tam3) domain; that stretch reads VVDEYFKEKY…EQLIFLKMNL (83 aa).

In terms of tissue distribution, expressed in pancreatic islet cells and weakly expressed in surrounding exocrine tissues (at protein level). Expressed in muscle and brain (at protein level). Shows broad tissue distribution with expression detected in brain, stomach, intestine, heart, kidney, liver, lung, skeletal muscle, ovary, spleen, tail and testis.

It localises to the nucleus. It is found in the nucleolus. The protein localises to the cytoplasm. Its function is as follows. Transcriptional repressor which binds to the consensus sequence 5'-GCTCGC-3', transcription regulation may be tissue-specific. Regulates the expression of target genes such as: IGF2, PGAP6/TMEM8, ENHO, and PIANP. Acts as a transcriptional repressor of growth factor IGF2, thereby negatively regulating postnatal growth of muscles and internal organs, especially in females. Negatively regulates myoblast differentiation and myoblast mitochondrial activity via its regulation of IGF2 transcription. Negatively regulates the cell cycle of myoblasts, potentially via transcriptional regulation of the E2F family of transcription factors such as: E2F1 and E2F2. Positively regulates the cell cycle and survival of pancreatic beta cells. Binds to the CDH2 gene and may directly repress CDH2 transcription. Probably by controlling CDH2 expression, regulates pancreatic beta cell adhesion, and formation of cell-to-cell junctions between pancreatic beta cells and neural crest stem cells. May also play a role in embryonic beta cell differentiation. May play a role in insulin sensitivity and glucose clearance. In Mus musculus (Mouse), this protein is Zinc finger BED domain-containing protein 6.